Reading from the N-terminus, the 116-residue chain is MSFNEQQCKQPCVPPPCLQKTQEQCQAKAEEVCLPPCQDPCQEKCPTKVQEVCVPQCQALSQDNCPQQSQDPCLPLCPDQCPSQCTEPCQELSQTKCVEVCPQKIQEKCLPPGKGK.

In Bos taurus (Bovine), this protein is Proline-rich protein 9 (PRR9).